The following is a 120-amino-acid chain: Large ribosomal subunit protein uL18 (120 aa).

The protein belongs to the universal ribosomal protein uL18 family. In terms of assembly, part of the 50S ribosomal subunit; part of the 5S rRNA/L5/L18/L25 subcomplex. Contacts the 5S and 23S rRNAs.

This is one of the proteins that bind and probably mediate the attachment of the 5S RNA into the large ribosomal subunit, where it forms part of the central protuberance. This Rhodopseudomonas palustris (strain HaA2) protein is Large ribosomal subunit protein uL18.